A 919-amino-acid chain; its full sequence is Probable disease resistance protein At4g27220 (919 aa).

Coiled-coil stretches lie at residues 1–30 (MFRSNARALNRALERLKNVQTKVNEALKRS) and 74–95 (VEILEKVKRLEEQGQDLIKKIS). One can recognise an NB-ARC domain in the interval 121 to 399 (MLDKLKDCLK…AEGLLDGQHH (279 aa)). 141 to 148 (GMGGVGKT) serves as a coordination point for ATP. 8 LRR repeats span residues 447-468 (GEGFHSLVMAGRGLIEFPQDKF), 469-492 (VSSVQRVSLMANKLERLPNNVIEG), 494-516 (ETLVLLLQGNSHVKEVPNGFLQA), 519-540 (NLRILDLSGVRIRTLPDSFSNL), 542-564 (SLRSLVLRNCKKLRNLPSLESLV), 565-587 (KLQFLDLHESAIRELPRGLEALS), 588-610 (SLRYICVSNTYQLQSIPAGTILQ), and 611-635 (LSSLEVLDMAGSAYSWGIKGEEREG).

The protein belongs to the disease resistance NB-LRR family.

Its function is as follows. Probable disease resistance protein. In Arabidopsis thaliana (Mouse-ear cress), this protein is Probable disease resistance protein At4g27220.